Consider the following 234-residue polypeptide: Large ribosomal subunit protein uL1 (234 aa).

Belongs to the universal ribosomal protein uL1 family. As to quaternary structure, part of the 50S ribosomal subunit.

Functionally, binds directly to 23S rRNA. The L1 stalk is quite mobile in the ribosome, and is involved in E site tRNA release. Protein L1 is also a translational repressor protein, it controls the translation of the L11 operon by binding to its mRNA. This Helicobacter pylori (strain G27) protein is Large ribosomal subunit protein uL1.